A 122-amino-acid polypeptide reads, in one-letter code: Large ribosomal subunit protein uL14c (122 aa).

Belongs to the universal ribosomal protein uL14 family. In terms of assembly, part of the 50S ribosomal subunit.

Its subcellular location is the plastid. It localises to the chloroplast. Its function is as follows. Binds to 23S rRNA. This Panax ginseng (Korean ginseng) protein is Large ribosomal subunit protein uL14c.